The primary structure comprises 387 residues: tRNA pseudouridine synthase B (387 aa).

D43 acts as the Nucleophile in catalysis.

It belongs to the pseudouridine synthase TruB family. Type 1 subfamily.

It carries out the reaction uridine(55) in tRNA = pseudouridine(55) in tRNA. Functionally, responsible for synthesis of pseudouridine from uracil-55 in the psi GC loop of transfer RNAs. The sequence is that of tRNA pseudouridine synthase B from Bifidobacterium longum (strain NCC 2705).